We begin with the raw amino-acid sequence, 60 residues long: Cytochrome c oxidase subunit 7, mitochondrial (60 aa).

The Mitochondrial matrix segment spans residues 2–29 (ANKVIQLQKIFQSSTKPLWWRHPRSALY). Residues 30–53 (LYPFYAIFAVAVVTPLLYIPNAIR) traverse the membrane as a helical segment. At 54 to 60 (GIKAKKA) the chain is on the mitochondrial intermembrane side.

It belongs to the cytochrome c oxidase VIIa family. As to quaternary structure, component of the cytochrome c oxidase (complex IV, CIV), a multisubunit enzyme composed of 12 subunits. The complex is composed of a catalytic core of 3 subunits COX1, COX2 and COX3, encoded in the mitochondrial DNA, and 9 supernumerary subunits COX4, COX5A (or COX5B), COX6, COX7, COX8, COX9, COX12, COX13 and COX26, which are encoded in the nuclear genome. The complex exists as a monomer or a dimer and forms supercomplexes (SCs) in the inner mitochondrial membrane with a dimer of ubiquinol-cytochrome c oxidoreductase (cytochrome b-c1 complex, complex III, CIII), resulting in 2 different assemblies (supercomplexes III(2)IV and III(2)IV(2)).

It localises to the mitochondrion inner membrane. Its pathway is energy metabolism; oxidative phosphorylation. Its function is as follows. Component of the cytochrome c oxidase, the last enzyme in the mitochondrial electron transport chain which drives oxidative phosphorylation. The respiratory chain contains 3 multisubunit complexes succinate dehydrogenase (complex II, CII), ubiquinol-cytochrome c oxidoreductase (cytochrome b-c1 complex, complex III, CIII) and cytochrome c oxidase (complex IV, CIV), that cooperate to transfer electrons derived from NADH and succinate to molecular oxygen, creating an electrochemical gradient over the inner membrane that drives transmembrane transport and the ATP synthase. Cytochrome c oxidase is the component of the respiratory chain that catalyzes the reduction of oxygen to water. Electrons originating from reduced cytochrome c in the intermembrane space (IMS) are transferred via the dinuclear copper A center (CU(A)) of COX2 and heme A of COX1 to the active site in COX1, a binuclear center (BNC) formed by heme A3 and copper B (CU(B)). The BNC reduces molecular oxygen to 2 water molecules using 4 electrons from cytochrome c in the IMS and 4 protons from the mitochondrial matrix. The chain is Cytochrome c oxidase subunit 7, mitochondrial (COX7) from Saccharomyces cerevisiae (strain ATCC 204508 / S288c) (Baker's yeast).